Here is a 205-residue protein sequence, read N- to C-terminus: Thymidylate kinase (205 aa).

Residue 10 to 17 (GLEGAGKS) participates in ATP binding.

This sequence belongs to the thymidylate kinase family.

The enzyme catalyses dTMP + ATP = dTDP + ADP. Phosphorylation of dTMP to form dTDP in both de novo and salvage pathways of dTTP synthesis. The polypeptide is Thymidylate kinase (Idiomarina loihiensis (strain ATCC BAA-735 / DSM 15497 / L2-TR)).